Here is a 178-residue protein sequence, read N- to C-terminus: Photosystem II extrinsic protein V (178 aa).

The N-terminal stretch at 1–38 (MFSKFFSLQKAFAAARRRLLILILVLGMAGYAWGPALA) is a signal peptide. 4 residues coordinate heme c: Cys-71, Cys-74, His-75, and His-126.

Belongs to the cytochrome c family. PsbV subfamily. In terms of assembly, PSII is composed of 1 copy each of membrane proteins PsbA, PsbB, PsbC, PsbD, PsbE, PsbF, PsbH, PsbI, PsbJ, PsbK, PsbL, PsbM, PsbT, PsbX, PsbY, PsbZ, Psb30/Ycf12, peripheral proteins PsbO, CyanoQ (PsbQ), PsbU, PsbV and a large number of cofactors. It forms dimeric complexes. It depends on heme c as a cofactor.

It localises to the cellular thylakoid membrane. Its function is as follows. One of the extrinsic, lumenal subunits of photosystem II (PSII). PSII is a light-driven water plastoquinone oxidoreductase, using light energy to abstract electrons from H(2)O, generating a proton gradient subsequently used for ATP formation. The extrinsic proteins stabilize the structure of photosystem II oxygen-evolving complex (OEC), the ion environment of oxygen evolution and protect the OEC against heat-induced inactivation. Low-potential cytochrome c that plays a role in the OEC of PSII. This chain is Photosystem II extrinsic protein V, found in Synechococcus sp. (strain JA-3-3Ab) (Cyanobacteria bacterium Yellowstone A-Prime).